We begin with the raw amino-acid sequence, 412 residues long: Transforming growth factor beta-2 proprotein (412 aa).

Residues 1-20 form the signal peptide; it reads MHCYLLSVFLTLDLAAVALS. N-linked (GlcNAc...) asparagine glycans are attached at residues Asn-72, Asn-139, and Asn-240. 4 cysteine pairs are disulfide-bonded: Cys-307/Cys-316, Cys-315/Cys-378, Cys-344/Cys-409, and Cys-348/Cys-411.

Belongs to the TGF-beta family. In terms of assembly, interacts with Transforming growth factor beta-2 (TGF-beta-2) chain; interaction is non-covalent and maintains (TGF-beta-2) in a latent state. As to quaternary structure, homodimer; disulfide-linked. Interacts with TGF-beta receptors (TGFBR1 and TGFBR2), leading to signal transduction. The precursor proprotein is cleaved in the Golgi apparatus to form Transforming growth factor beta-2 (TGF-beta-2) and Latency-associated peptide (LAP) chains, which remain non-covalently linked, rendering TGF-beta-2 inactive.

Its subcellular location is the secreted. The protein localises to the extracellular space. The protein resides in the extracellular matrix. Functionally, precursor of the Latency-associated peptide (LAP) and Transforming growth factor beta-2 (TGF-beta-2) chains, which constitute the regulatory and active subunit of TGF-beta-2, respectively. Required to maintain the Transforming growth factor beta-2 (TGF-beta-2) chain in a latent state during storage in extracellular matrix. Associates non-covalently with TGF-beta-2 and regulates its activation via interaction with 'milieu molecules', such as LTBP1 and LRRC32/GARP, that control activation of TGF-beta-2. In terms of biological role, multifunctional protein that regulates various processes such as angiogenesis and heart development. Activation into mature form follows different steps: following cleavage of the proprotein in the Golgi apparatus, Latency-associated peptide (LAP) and Transforming growth factor beta-2 (TGF-beta-2) chains remain non-covalently linked rendering TGF-beta-2 inactive during storage in extracellular matrix. At the same time, LAP chain interacts with 'milieu molecules', such as LTBP1 and LRRC32/GARP, that control activation of TGF-beta-2 and maintain it in a latent state during storage in extracellular milieus. Once activated following release of LAP, TGF-beta-2 acts by binding to TGF-beta receptors (TGFBR1 and TGFBR2), which transduce signal. The protein is Transforming growth factor beta-2 proprotein (TGFB2) of Gallus gallus (Chicken).